The sequence spans 34 residues: Hemopexin (34 aa).

Residues 1–25 form a disordered region; that stretch reads RPLTQHKPHTPGDEHPHGAEPPGXD.

The protein belongs to the hemopexin family. As to expression, expressed by the liver and secreted in plasma.

It is found in the secreted. Functionally, binds heme and transports it to the liver for breakdown and iron recovery, after which the free hemopexin returns to the circulation. This chain is Hemopexin (HPX), found in Gallus gallus (Chicken).